We begin with the raw amino-acid sequence, 887 residues long: Phosphatidylinositol 3-kinase catalytic subunit type 3 (887 aa).

The region spanning 35-184 is the C2 PI3K-type domain; sequence YKAVLEDPML…LAKLTKAHRQ (150 aa). The tract at residues 150–170 is disordered; the sequence is EADGSEPTKTPGRTSSTLSED. Residues 156–170 are compositionally biased toward polar residues; that stretch reads PTKTPGRTSSTLSED. Phosphothreonine; by AMPK is present on Thr-163. Ser-165 carries the phosphoserine; by AMPK modification. Phosphoserine occurs at positions 244, 261, and 282. The 239-residue stretch at 282-520 folds into the PIK helical domain; the sequence is SDHGLKPNAA…PKTHEMYLNV (239 aa). Disordered regions lie at residues 416 to 435 and 446 to 468; these read EPTKKESQGSVSESVSNSGI and ITSPLPPVSSPPPASKTKESSDG. Positions 423–435 are enriched in low complexity; the sequence is QGSVSESVSNSGI. Pro residues predominate over residues 449–459; it reads PLPPVSSPPPA. Residues 605-871 enclose the PI3K/PI4K catalytic domain; that stretch reads IPETATLFKS…LIDESVHALF (267 aa). The interval 611 to 617 is G-loop; the sequence is LFKSALM. The tract at residues 740–748 is catalytic loop; it reads GVGDRHLDN. The activation loop stretch occupies residues 759–780; it reads HIDFGYILGRDPKPLPPPMKLN.

Belongs to the PI3/PI4-kinase family. As to quaternary structure, component of the PI3K (PI3KC3/PI3K-III/class III phosphatidylinositol 3-kinase) complex the core of which is composed of the catalytic subunit PIK3C3, the regulatory subunit PIK3R4 and BECN1 associating with additional regulatory/auxiliary subunits to form alternative complex forms. Alternative complex forms containing a fourth regulatory subunit in a mutually exclusive manner are: the PI3K complex I (PI3KC3-C1) containing ATG14, and the PI3K complex II (PI3KC3-C2) containing UVRAG. PI3KC3-C1 displays a V-shaped architecture with PIK3R4 serving as a bridge between PIK3C3 and the ATG14:BECN1 subcomplex. Both, PI3KC3-C1 and PI3KC3-C2, can associate with further regulatory subunits such as RUBCN, SH3GLB1/Bif-1 and AMBRA1. PI3KC3-C1 probably associates with PIK3CB. Interacts with RAB7A in the presence of PIK3R4. Interacts with AMBRA1. Interacts with BECN1P1/BECN2. Interacts with SLAMF1. May be a component of a complex composed of RAB5A (in GDP-bound form), DYN2 and PIK3C3. Interacts with NCKAP1L. Interacts with ATG14; this interaction is increased in the absence of TMEM39A. Interacts with STEEP1; the interaction is STING1-dependent and required for trafficking of STING1 from the endoplasmic reticulum. Interacts with YWHAG. Interacts with ARMC3. Mn(2+) is required as a cofactor. Ubiquitinated via 'Lys-29'- and 'Lys-48'-linked ubiquitination by UBE3C, promoting its degradation. Deubiquitination by ZRANB1/TRABID promotes its stabilization, leading to autophagosome maturation.

It localises to the midbody. Its subcellular location is the late endosome. The protein localises to the cytoplasmic vesicle. It is found in the autophagosome. The enzyme catalyses a 1,2-diacyl-sn-glycero-3-phospho-(1D-myo-inositol) + ATP = a 1,2-diacyl-sn-glycero-3-phospho-(1D-myo-inositol-3-phosphate) + ADP + H(+). Catalytic subunit of the PI3K complex that mediates formation of phosphatidylinositol 3-phosphate; different complex forms are believed to play a role in multiple membrane trafficking pathways: PI3KC3-C1 is involved in initiation of autophagosomes and PI3KC3-C2 in maturation of autophagosomes and endocytosis. As part of PI3KC3-C1, promotes endoplasmic reticulum membrane curvature formation prior to vesicle budding. Involved in regulation of degradative endocytic trafficking and required for the abscission step in cytokinesis, probably in the context of PI3KC3-C2. Involved in the transport of lysosomal enzyme precursors to lysosomes. Required for transport from early to late endosomes. This Sus scrofa (Pig) protein is Phosphatidylinositol 3-kinase catalytic subunit type 3.